A 257-amino-acid polypeptide reads, in one-letter code: Pyridoxine 5'-phosphate synthase (257 aa).

Residue Asn-6 participates in 3-amino-2-oxopropyl phosphate binding. Residue 8–9 (DH) coordinates 1-deoxy-D-xylulose 5-phosphate. Residue Arg-17 coordinates 3-amino-2-oxopropyl phosphate. His-41 functions as the Proton acceptor in the catalytic mechanism. Residues Arg-43 and His-48 each coordinate 1-deoxy-D-xylulose 5-phosphate. The active-site Proton acceptor is the Glu-68. Thr-98 contributes to the 1-deoxy-D-xylulose 5-phosphate binding site. His-210 functions as the Proton donor in the catalytic mechanism. Residues Gly-211 and 232–233 (GQ) contribute to the 3-amino-2-oxopropyl phosphate site.

The protein belongs to the PNP synthase family. As to quaternary structure, homooctamer; tetramer of dimers.

Its subcellular location is the cytoplasm. The enzyme catalyses 3-amino-2-oxopropyl phosphate + 1-deoxy-D-xylulose 5-phosphate = pyridoxine 5'-phosphate + phosphate + 2 H2O + H(+). The protein operates within cofactor biosynthesis; pyridoxine 5'-phosphate biosynthesis; pyridoxine 5'-phosphate from D-erythrose 4-phosphate: step 5/5. In terms of biological role, catalyzes the complicated ring closure reaction between the two acyclic compounds 1-deoxy-D-xylulose-5-phosphate (DXP) and 3-amino-2-oxopropyl phosphate (1-amino-acetone-3-phosphate or AAP) to form pyridoxine 5'-phosphate (PNP) and inorganic phosphate. The polypeptide is Pyridoxine 5'-phosphate synthase (Campylobacter jejuni subsp. jejuni serotype O:6 (strain 81116 / NCTC 11828)).